The chain runs to 216 residues: LHFPL tetraspan subfamily member 3 protein (216 aa).

The next 4 membrane-spanning stretches (helical) occupy residues 22-42 (IGVL…VCFV), 96-116 (FFIG…ALFF), 126-146 (ICGW…MIYP), and 177-197 (ILAI…FVLG).

Belongs to the LHFP family.

The protein localises to the membrane. This is LHFPL tetraspan subfamily member 3 protein from Danio rerio (Zebrafish).